Reading from the N-terminus, the 376-residue chain is Neuropeptide receptor 3 (376 aa).

The Extracellular segment spans residues 1-29 (MEGGRNCVMTVQQWQPEYNDMNQIRAIFS). The chain crosses the membrane as a helical span at residues 30-50 (LLYLLVWVGAIVGNTLVLYVL). Residues 51 to 66 (TFNQVSLSVRTVFVGC) are Cytoplasmic-facing. Residues 67-87 (LAGSDLLMCLFSLPITAISIF) traverse the membrane as a helical segment. Residues 88 to 89 (SR) are Extracellular-facing. The helical transmembrane segment at 90–110 (VWVFPAIFCKLIGVFQGGTIF) threads the bilayer. Residues Cys-98 and Cys-175 are joined by a disulfide bond. Over 111–139 (VSSFTLTVIALDRCVLILRPNQEIVNFPR) the chain is Cytoplasmic. A helical transmembrane segment spans residues 140-160 (AVFIVFCIWLLGYSLALPVGI). The Extracellular segment spans residues 161 to 197 (YSDIAVYDEICGTFCEENWPDFNPDTGRSGIRRAYGL). A helical transmembrane segment spans residues 198–218 (SVLVLQFGIPALISSICYWMI). Over 219–251 (SRVMSDQLARRRGHNIRPESETKLVNRKTRANR) the chain is Cytoplasmic. The helical transmembrane segment at 252-272 (MMIVMVVGFVLAWMPFNAVNL) threads the bilayer. Residues 273–284 (YRDLFGISKWYS) lie on the Extracellular side of the membrane. Residues 285-305 (TVFALCHVCAMCSAVLNPIIY) form a helical membrane-spanning segment. Residues 306–376 (SWFNPQFRQS…NDYRAGDQLL (71 aa)) are Cytoplasmic-facing.

The protein belongs to the G-protein coupled receptor 1 family.

The protein resides in the cell membrane. Its function is as follows. G-protein coupled receptor for flp-15 neuropeptides. Receptor activation assays suggest binding to predicted flp-15 peptides, GGPQGPLRF-NH2 and RGPSGPLRF-NH2. Likely involved in Gi/Go-coupled signaling pathways. In Caenorhabditis elegans, this protein is Neuropeptide receptor 3.